The sequence spans 286 residues: 3-hydroxyanthranilate 3,4-dioxygenase (286 aa).

The domain A (catalytic) stretch occupies residues 1 to 160; the sequence is MERRVRVKSW…SEQYRTGKPN (160 aa). R43 is a binding site for O2. The Fe cation site is built by H47, E53, and H91. E53 provides a ligand contact to substrate. Residues R95 and E105 each coordinate substrate. The linker stretch occupies residues 161 to 177; that stretch reads PDQLLKELPFPLNTRSI. The segment at 178–286 is domain B; that stretch reads MKPMSLKAWL…QDPARKKPWW (109 aa).

This sequence belongs to the 3-HAO family. As to quaternary structure, monomer. It depends on Fe(2+) as a cofactor.

The protein resides in the cytoplasm. It localises to the cytosol. It carries out the reaction 3-hydroxyanthranilate + O2 = (2Z,4Z)-2-amino-3-carboxymuconate 6-semialdehyde. It functions in the pathway cofactor biosynthesis; NAD(+) biosynthesis; quinolinate from L-kynurenine: step 3/3. In terms of biological role, catalyzes the oxidative ring opening of 3-hydroxyanthranilate to 2-amino-3-carboxymuconate semialdehyde, which spontaneously cyclizes to quinolinate. This chain is 3-hydroxyanthranilate 3,4-dioxygenase (Haao), found in Mus musculus (Mouse).